The primary structure comprises 315 residues: Aspartate carbamoyltransferase catalytic subunit (315 aa).

The carbamoyl phosphate site is built by R65 and T66. K93 lines the L-aspartate pocket. Positions 115, 145, and 148 each coordinate carbamoyl phosphate. L-aspartate-binding residues include R179 and R234. 2 residues coordinate carbamoyl phosphate: G275 and P276.

It belongs to the aspartate/ornithine carbamoyltransferase superfamily. ATCase family. Heterododecamer (2C3:3R2) of six catalytic PyrB chains organized as two trimers (C3), and six regulatory PyrI chains organized as three dimers (R2).

The enzyme catalyses carbamoyl phosphate + L-aspartate = N-carbamoyl-L-aspartate + phosphate + H(+). It functions in the pathway pyrimidine metabolism; UMP biosynthesis via de novo pathway; (S)-dihydroorotate from bicarbonate: step 2/3. Catalyzes the condensation of carbamoyl phosphate and aspartate to form carbamoyl aspartate and inorganic phosphate, the committed step in the de novo pyrimidine nucleotide biosynthesis pathway. The polypeptide is Aspartate carbamoyltransferase catalytic subunit (Xanthomonas euvesicatoria pv. vesicatoria (strain 85-10) (Xanthomonas campestris pv. vesicatoria)).